The sequence spans 397 residues: uncharacterized protein (397 aa).

Positions 368-391 are disordered; the sequence is TTKPGLHQPTQKRPTQTTSKPYIN. Positions 375–388 are enriched in polar residues; the sequence is QPTQKRPTQTTSKP.

This is an uncharacterized protein from Acanthamoeba polyphaga mimivirus (APMV).